We begin with the raw amino-acid sequence, 269 residues long: Hemin import ATP-binding protein HmuV (269 aa).

An ABC transporter domain is found at 5 to 242 (LDAEAASFAI…SLIRRVFDIA (238 aa)). 37–44 (GPNGAGKS) is an ATP binding site.

Belongs to the ABC transporter superfamily. Heme (hemin) importer (TC 3.A.1.14.5) family. In terms of assembly, the complex is composed of two ATP-binding proteins (HmuV), two transmembrane proteins (HmuU) and a solute-binding protein (HmuT).

It is found in the cell inner membrane. In terms of biological role, part of the ABC transporter complex HmuTUV involved in hemin import. Responsible for energy coupling to the transport system. This is Hemin import ATP-binding protein HmuV from Rhodopseudomonas palustris (strain BisB18).